The primary structure comprises 172 residues: Large ribosomal subunit protein bL9 (172 aa).

The protein belongs to the bacterial ribosomal protein bL9 family.

Functionally, binds to the 23S rRNA. The sequence is that of Large ribosomal subunit protein bL9 from Chlamydia abortus (strain DSM 27085 / S26/3) (Chlamydophila abortus).